Consider the following 503-residue polypeptide: Transcriptional regulator LovE (503 aa).

The zn(2)-C6 fungal-type DNA-binding region spans 35–67; sequence CDRCHAQKIKCTGNKEVTGRAPCQRCQQAGLRC. 2 disordered regions span residues 89 to 124 and 331 to 358; these read ADPD…RQFL and SHMS…HSSV. Residues 339-357 show a composition bias toward low complexity; the sequence is SRSQSPSRDDTSSSSGHSS.

It is found in the nucleus. In terms of biological role, transcription factor that regulates the expression of the he gene cluster that mediates the biosynthesis of lovastatin (also known as mevinolin, mevacor or monacolin K), a hypolipidemic inhibitor of (3S)-hydroxymethylglutaryl-coenzyme A (HMG-CoA) reductase (HMGR). This chain is Transcriptional regulator LovE, found in Aspergillus terreus.